The following is a 1616-amino-acid chain: Vitellogenin-1 (1616 aa).

Positions 1 to 19 (MRSIIIASIVALAIAFSPA) are cleaved as a signal peptide. The 666-residue stretch at 24–689 (FEPKIDYHYK…EKNSFLLKDL (666 aa)) folds into the Vitellogenin domain. Asparagine 1270 is a glycosylation site (N-linked (GlcNAc...) asparagine). Residues 1310-1479 (SVCKVQKNQI…SYLLKNEECE (170 aa)) form the VWFD domain. Cystine bridges form between cysteine 1312–cysteine 1442 and cysteine 1334–cysteine 1478. The span at 1505–1514 (SFEETYDYEQ) shows a compositional bias: acidic residues. The disordered stretch occupies residues 1505–1531 (SFEETYDYEQENTNKKQKNQRSQKKSD).

Expressed in the intestine of adult hermaphrodites.

It localises to the secreted. Precursor of the egg-yolk proteins that are sources of nutrients during embryonic development. Together with other vitellogenins, may play a role in modulating life-span, acting via induction of autophagy and lysosomal lipolysis. The polypeptide is Vitellogenin-1 (vit-1) (Caenorhabditis elegans).